Reading from the N-terminus, the 444-residue chain is 4-O-dimethylallyl-L-tyrosine synthase (444 aa).

This sequence belongs to the tryptophan dimethylallyltransferase family. Homodimer.

It carries out the reaction L-tyrosine + dimethylallyl diphosphate = 4-O-dimethylallyl-L-tyrosine + diphosphate. In terms of biological role, 4-O-dimethylallyl-L-tyrosine synthase; part of the gene cluster that mediates the biosynthesis of an unusual class of epipolythiodioxopiperazines (ETPs) lacking the reactive thiol group important for toxicity. Firstly, L-tyrosine is prenylated by tcpD, before undergoing condensation with L-glycine in a reaction catalyzed by the NRPS tcpP leading to the diketopiperazine (DKP) backbone. Afterwards the alpha-carbon of tyrosine is oxidized by the cytochrome P450 tcpC to form a hydroxyl group. However, in contrast other ETP biosynthesis pathways studied so far, tcpC is not able to bishydroxylate the DKP at both alpha-carbon positions, but hydroxylates the alpha-carbon of the tyrosine part and the nitrogen of the glycine part. The next steps involve an alpha,beta-elimination reaction catalyzed by tcpI, a methylation by the methyltransferase tcpN the action of the four enzyme cascade tcpG/K/J/I. Due to a dysfunctional cytochrome P450 monooxygenase tcpC, the pathway leads to the biosynthesis of probable non-toxic metabolites lacking the reactive thiol group. The polypeptide is 4-O-dimethylallyl-L-tyrosine synthase (Claviceps purpurea (strain 20.1) (Ergot fungus)).